A 186-amino-acid polypeptide reads, in one-letter code: MSEPASISTGVAARYATAVYDIAKDSKSVKTLEDDINVLQGALAESADFGALIMSPIYTREEQEAAISALAAKMGLSATMANTLSLMAQKRRLFVVPQLLSTLREIIAEDKGEVTADVVSAKALTKTQADKLAKTLKASTGKTVTLNASVDESLIGGLVVKVGSRMIDTSIRSKLNSLQNAMKEVG.

This sequence belongs to the ATPase delta chain family. As to quaternary structure, F-type ATPases have 2 components, F(1) - the catalytic core - and F(0) - the membrane proton channel. F(1) has five subunits: alpha(3), beta(3), gamma(1), delta(1), epsilon(1). CF(0) has four main subunits: a(1), b(1), b'(1) and c(10-14). The alpha and beta chains form an alternating ring which encloses part of the gamma chain. F(1) is attached to F(0) by a central stalk formed by the gamma and epsilon chains, while a peripheral stalk is formed by the delta, b and b' chains.

The protein localises to the cell inner membrane. In terms of biological role, f(1)F(0) ATP synthase produces ATP from ADP in the presence of a proton or sodium gradient. F-type ATPases consist of two structural domains, F(1) containing the extramembraneous catalytic core and F(0) containing the membrane proton channel, linked together by a central stalk and a peripheral stalk. During catalysis, ATP synthesis in the catalytic domain of F(1) is coupled via a rotary mechanism of the central stalk subunits to proton translocation. This protein is part of the stalk that links CF(0) to CF(1). It either transmits conformational changes from CF(0) to CF(1) or is implicated in proton conduction. The sequence is that of ATP synthase subunit delta from Roseobacter denitrificans (strain ATCC 33942 / OCh 114) (Erythrobacter sp. (strain OCh 114)).